We begin with the raw amino-acid sequence, 556 residues long: Formate--tetrahydrofolate ligase (556 aa).

Position 65-72 (65-72 (TPAGEGKT)) interacts with ATP.

This sequence belongs to the formate--tetrahydrofolate ligase family.

The catalysed reaction is (6S)-5,6,7,8-tetrahydrofolate + formate + ATP = (6R)-10-formyltetrahydrofolate + ADP + phosphate. The protein operates within one-carbon metabolism; tetrahydrofolate interconversion. This Lachnoclostridium phytofermentans (strain ATCC 700394 / DSM 18823 / ISDg) (Clostridium phytofermentans) protein is Formate--tetrahydrofolate ligase.